A 433-amino-acid chain; its full sequence is Mitochondrial distribution and morphology protein 12 (433 aa).

In terms of domain architecture, SMP-LTD spans 1–433 (MSIDIDWERA…VYPSFWTFLI (433 aa)). Disordered regions lie at residues 62-113 (LSDP…GGQM), 180-279 (TPLG…RMRE), and 356-376 (GPETAAGSGGGDTLEPNSPRR). The span at 81 to 96 (SEERSPTREPVDRYGN) shows a compositional bias: basic and acidic residues. The segment covering 214 to 236 (SAQSRPSTANTGNTLPSRDSMSV) has biased composition (polar residues). Positions 268 to 279 (PLDDTPPRRMRE) are enriched in basic and acidic residues.

It belongs to the MDM12 family. In terms of assembly, component of the ER-mitochondria encounter structure (ERMES) or MDM complex, composed of MMM1, MDM10, MDM12 and MDM34. An MMM1 homodimer associates with one molecule of MDM12 on each side in a pairwise head-to-tail manner, and the SMP-LTD domains of MMM1 and MDM12 generate a continuous hydrophobic tunnel for phospholipid trafficking.

It is found in the mitochondrion outer membrane. The protein resides in the endoplasmic reticulum membrane. Its function is as follows. Component of the ERMES/MDM complex, which serves as a molecular tether to connect the endoplasmic reticulum (ER) and mitochondria. Components of this complex are involved in the control of mitochondrial shape and protein biogenesis, and function in nonvesicular lipid trafficking between the ER and mitochondria. MDM12 is required for the interaction of the ER-resident membrane protein MMM1 and the outer mitochondrial membrane-resident beta-barrel protein MDM10. The MDM12-MMM1 subcomplex functions in the major beta-barrel assembly pathway that is responsible for biogenesis of all mitochondrial outer membrane beta-barrel proteins, and acts in a late step after the SAM complex. The MDM10-MDM12-MMM1 subcomplex further acts in the TOM40-specific pathway after the action of the MDM12-MMM1 complex. Essential for establishing and maintaining the structure of mitochondria and maintenance of mtDNA nucleoids. The protein is Mitochondrial distribution and morphology protein 12 of Ajellomyces capsulatus (strain NAm1 / WU24) (Darling's disease fungus).